The primary structure comprises 151 residues: D-aminoacyl-tRNA deacylase (151 aa).

Residues Gly-142–Pro-143 carry the Gly-cisPro motif, important for rejection of L-amino acids motif.

The protein belongs to the DTD family. As to quaternary structure, homodimer.

The protein localises to the cytoplasm. It catalyses the reaction glycyl-tRNA(Ala) + H2O = tRNA(Ala) + glycine + H(+). It carries out the reaction a D-aminoacyl-tRNA + H2O = a tRNA + a D-alpha-amino acid + H(+). Its function is as follows. An aminoacyl-tRNA editing enzyme that deacylates mischarged D-aminoacyl-tRNAs. Also deacylates mischarged glycyl-tRNA(Ala), protecting cells against glycine mischarging by AlaRS. Acts via tRNA-based rather than protein-based catalysis; rejects L-amino acids rather than detecting D-amino acids in the active site. By recycling D-aminoacyl-tRNA to D-amino acids and free tRNA molecules, this enzyme counteracts the toxicity associated with the formation of D-aminoacyl-tRNA entities in vivo and helps enforce protein L-homochirality. This chain is D-aminoacyl-tRNA deacylase, found in Psychrobacter cryohalolentis (strain ATCC BAA-1226 / DSM 17306 / VKM B-2378 / K5).